A 72-amino-acid polypeptide reads, in one-letter code: Sec-independent protein translocase protein TatA (72 aa).

A helical transmembrane segment spans residues 1-21; sequence MLGGISIWQLLIVLAILVLIF.

This sequence belongs to the TatA/E family. In terms of assembly, the Tat system comprises two distinct complexes: a TatABC complex, containing multiple copies of TatA, TatB and TatC subunits, and a separate TatA complex, containing only TatA subunits. Substrates initially bind to the TatABC complex, which probably triggers association of the separate TatA complex to form the active translocon.

It is found in the cell inner membrane. Its function is as follows. Part of the twin-arginine translocation (Tat) system that transports large folded proteins containing a characteristic twin-arginine motif in their signal peptide across membranes. TatA could form the protein-conducting channel of the Tat system. The polypeptide is Sec-independent protein translocase protein TatA (Marinomonas sp. (strain MWYL1)).